A 158-amino-acid chain; its full sequence is U4/U6.U5 small nuclear ribonucleoprotein 27 kDa protein (158 aa).

Residues 1-30 (MGRSRSRTPPRRERRRSRSSSRDRERRRRE) show a composition bias toward basic residues. Residues 1–100 (MGRSRSRTPP…ISAEDMQGKT (100 aa)) are disordered. A compositionally biased stretch (basic and acidic residues) spans 31-41 (RERSRSRDRDR). Residues 42–62 (RRSRSRSPHRRRSRSPRRHRS) show a composition bias toward basic residues. The span at 69-86 (RQKDRRDDDRKDVKEKPA) shows a compositional bias: basic and acidic residues.

Belongs to the SNUT3 family. Part of a tri-snRNP complex.

It is found in the nucleus. Its function is as follows. May play a role in mRNA splicing. This is U4/U6.U5 small nuclear ribonucleoprotein 27 kDa protein (snrnp27) from Danio rerio (Zebrafish).